Consider the following 314-residue polypeptide: Olfactory receptor 51G2 (314 aa).

Over 1–30 (MTLGSLGNSSSSVSATFLLSGIPGLERMHI) the chain is Extracellular. A glycan (N-linked (GlcNAc...) asparagine) is linked at Asn8. A helical membrane pass occupies residues 31-51 (WISIPLCFMYLVSIPGNCTIL). The Cytoplasmic portion of the chain corresponds to 52 to 59 (FIIKTERS). A helical membrane pass occupies residues 60-80 (LHEPMYLFLSMLALIDLGLSL). Over 81-104 (CTLPTVLGIFWVGAREISHDACFA) the chain is Extracellular. An intrachain disulfide couples Cys102 to Cys194. The chain crosses the membrane as a helical span at residues 105 to 125 (QLFFIHCFSFLESSVLLSMAF). Residues 126 to 144 (DRFVAICHPLHYVSILTNT) are Cytoplasmic-facing. The chain crosses the membrane as a helical span at residues 145–165 (VIGRIGLVSLGRSVALIFPLP). At 166–201 (FMLKRFPYCGSPVLSHSYCLHQEVMKLACADMKANS) the chain is on the extracellular side. A helical transmembrane segment spans residues 202 to 222 (IYGMFVIVSTVGIDSLLILFS). Residues 223-242 (YALILRTVLSIASRAERFKA) lie on the Cytoplasmic side of the membrane. The helical transmembrane segment at 243–263 (LNTCVSHICAVLLFYTPMIGL) threads the bilayer. Topologically, residues 264-278 (SVIHRFGKQAPHLVQ) are extracellular. Residues 279 to 299 (VVMGFMYLLFPPVMNPIVYSV) traverse the membrane as a helical segment. At 300 to 314 (KTKQIRDRVTHAFCY) the chain is on the cytoplasmic side.

This sequence belongs to the G-protein coupled receptor 1 family.

It localises to the cell membrane. Odorant receptor. This is Olfactory receptor 51G2 (OR51G2) from Homo sapiens (Human).